A 618-amino-acid polypeptide reads, in one-letter code: tRNA endonuclease vms-1 (618 aa).

Residues 59–85 (DQCTTCNCPVDFGDRAVLLEHYQSLFH) form a C2H2-type zinc finger. The region spanning 170 to 311 (RPFDCAIFLW…SDCWQRLQQV (142 aa)) is the VLRF1 domain. The active site involves Gln-213. ANK repeat units follow at residues 437-466 (NRSTFLHVSAANDARKCLKYFLEEVNCDSS) and 470-496 (GAGLPPYSSSANSDVKSIFIDYRVKNE). Residues 502 to 539 (ARTHIPEPKKKVELTEEQEREQAERKKEKKARQKEKEK) are disordered. Positions 505–515 (HIPEPKKKVEL) are enriched in basic and acidic residues. Residues 510–557 (KKKVELTEEQEREQAERKKEKKARQKEKEKLKKEIAKRDVEEMEERQK) adopt a coiled-coil conformation.

The protein belongs to the ANKZF1/VMS1 family. In terms of tissue distribution, in larval stages and in adults, expressed in intestinal cells, specific neurons in the head and the tail, and in the ventral nerve cord.

It localises to the cytoplasm. It is found in the mitochondrion. Its function is as follows. Endonuclease that cleaves polypeptidyl-tRNAs downstream of the ribosome-associated quality control (RQC) pathway to release incompletely synthesized polypeptides for degradation. The RQC pathway disassembles aberrantly stalled translation complexes to recycle or degrade the constituent parts. Dispensable for viability and growth but is required for protection against oxidative stress and for wild-type life span. The sequence is that of tRNA endonuclease vms-1 (vms-1) from Caenorhabditis elegans.